The chain runs to 316 residues: Nucleotide-binding protein NFA_35930 (316 aa).

ATP is bound at residue 32–39 (GLSGAGRG). 83 to 86 (DVRS) lines the GTP pocket.

The protein belongs to the RapZ-like family.

Its function is as follows. Displays ATPase and GTPase activities. The protein is Nucleotide-binding protein NFA_35930 of Nocardia farcinica (strain IFM 10152).